The primary structure comprises 274 residues: tRNA pseudouridine synthase A (274 aa).

The Nucleophile role is filled by Asp-56. Tyr-109 is a binding site for substrate.

This sequence belongs to the tRNA pseudouridine synthase TruA family.

It catalyses the reaction uridine(38/39/40) in tRNA = pseudouridine(38/39/40) in tRNA. Functionally, formation of pseudouridine at positions 38, 39 and 40 in the anticodon stem and loop of transfer RNAs. The chain is tRNA pseudouridine synthase A from Methanosphaera stadtmanae (strain ATCC 43021 / DSM 3091 / JCM 11832 / MCB-3).